The following is a 281-amino-acid chain: Putative outer membrane protein BBA52 (281 aa).

The interval 162 to 281 (KRISDNQSKL…FFDSLEDQFI (120 aa)) is disordered. The segment covering 179–196 (NKSVGSKFSKNSRPSKSP) has biased composition (polar residues). Over residues 219-249 (EFLDDPSQESDELEREYQDDELESEDPDDGE) the composition is skewed to acidic residues. The segment covering 250-262 (REYQDDRESRDDT) has biased composition (basic and acidic residues). The segment covering 263 to 281 (FNEDQSEDEFFDSLEDQFI) has biased composition (acidic residues).

It localises to the cell outer membrane. This chain is Putative outer membrane protein BBA52, found in Borreliella burgdorferi (strain ATCC 35210 / DSM 4680 / CIP 102532 / B31) (Borrelia burgdorferi).